The chain runs to 402 residues: Argininosuccinate synthase (402 aa).

ATP-binding positions include 11–19 (AYSGGLDTS) and alanine 39. 2 residues coordinate L-citrulline: tyrosine 90 and serine 95. ATP is bound at residue glycine 120. Residues threonine 122, asparagine 126, and aspartate 127 each coordinate L-aspartate. An L-citrulline-binding site is contributed by asparagine 126. Residues arginine 130, serine 179, serine 188, glutamate 264, and tyrosine 276 each contribute to the L-citrulline site.

This sequence belongs to the argininosuccinate synthase family. Type 1 subfamily. As to quaternary structure, homotetramer.

The protein localises to the cytoplasm. It catalyses the reaction L-citrulline + L-aspartate + ATP = 2-(N(omega)-L-arginino)succinate + AMP + diphosphate + H(+). It functions in the pathway amino-acid biosynthesis; L-arginine biosynthesis; L-arginine from L-ornithine and carbamoyl phosphate: step 2/3. The chain is Argininosuccinate synthase from Roseiflexus castenholzii (strain DSM 13941 / HLO8).